We begin with the raw amino-acid sequence, 340 residues long: Phenylalanine--tRNA ligase alpha subunit (340 aa).

A Mg(2+)-binding site is contributed by E258.

The protein belongs to the class-II aminoacyl-tRNA synthetase family. Phe-tRNA synthetase alpha subunit type 1 subfamily. Tetramer of two alpha and two beta subunits. Requires Mg(2+) as cofactor.

Its subcellular location is the cytoplasm. The catalysed reaction is tRNA(Phe) + L-phenylalanine + ATP = L-phenylalanyl-tRNA(Phe) + AMP + diphosphate + H(+). This is Phenylalanine--tRNA ligase alpha subunit from Corynebacterium glutamicum (strain ATCC 13032 / DSM 20300 / JCM 1318 / BCRC 11384 / CCUG 27702 / LMG 3730 / NBRC 12168 / NCIMB 10025 / NRRL B-2784 / 534).